The following is a 245-amino-acid chain: Brasilane terpene glycosides biosynthesis cluster protein D (245 aa).

2 C3H1-type zinc fingers span residues 121–152 (KELKIICPWWLTDGYSCREHDQGKCPFYHDNV) and 161–185 (ICHFWADGGRCTKSQKDCRFAHYPA). The segment at 186–245 (PHRVTAPMPSKKKSKKLRSSVADDASHPDLGKARRHDPRDDEQNDEVWRNQGRARPGQEW) is disordered. Residues 209–226 (DASHPDLGKARRHDPRDD) are compositionally biased toward basic and acidic residues.

Its function is as follows. Part of the gene cluster that mediates the biosynthesis of the brasilane terpene glycosides brasilane D and E. The biosynthesis starts with the activity of the terpene cyclase braA that converts farnesyl pyrophosphate into the sesquiterpene alcohol trichobrasilenol. Subsequently, trichobrasilenol is glycosylated by the O-glycosyltransferase braB putatively using UDP-GlcNAc as sugar donor to yield brasilane A. The latter then undergoes two rounds of oxidation performed by the cytochrome P450 monooxygenase braC. In the first round braC hydroxylates C-12 forming brasilane D, which serves as substrate in the second round to establish the epoxide at the bond between C-5 and C-10 and oxidize the alcohol at C-12 to an aldehyde leading to the final product brasilane E. In Annulohypoxylon truncatum (Hypoxylon truncatum), this protein is Brasilane terpene glycosides biosynthesis cluster protein D.